We begin with the raw amino-acid sequence, 258 residues long: Deoxyribose-phosphate aldolase (258 aa).

The active-site Proton donor/acceptor is the Asp-102. Residue Lys-165 is the Schiff-base intermediate with acetaldehyde of the active site. Lys-199 serves as the catalytic Proton donor/acceptor.

The protein belongs to the DeoC/FbaB aldolase family. DeoC type 2 subfamily.

It localises to the cytoplasm. It carries out the reaction 2-deoxy-D-ribose 5-phosphate = D-glyceraldehyde 3-phosphate + acetaldehyde. The protein operates within carbohydrate degradation; 2-deoxy-D-ribose 1-phosphate degradation; D-glyceraldehyde 3-phosphate and acetaldehyde from 2-deoxy-alpha-D-ribose 1-phosphate: step 2/2. Its function is as follows. Catalyzes a reversible aldol reaction between acetaldehyde and D-glyceraldehyde 3-phosphate to generate 2-deoxy-D-ribose 5-phosphate. The chain is Deoxyribose-phosphate aldolase from Aliivibrio salmonicida (strain LFI1238) (Vibrio salmonicida (strain LFI1238)).